Reading from the N-terminus, the 206-residue chain is Large ribosomal subunit protein uL4 (206 aa).

This sequence belongs to the universal ribosomal protein uL4 family. In terms of assembly, part of the 50S ribosomal subunit.

Its function is as follows. One of the primary rRNA binding proteins, this protein initially binds near the 5'-end of the 23S rRNA. It is important during the early stages of 50S assembly. It makes multiple contacts with different domains of the 23S rRNA in the assembled 50S subunit and ribosome. Functionally, forms part of the polypeptide exit tunnel. The protein is Large ribosomal subunit protein uL4 of Rhodopseudomonas palustris (strain BisB18).